A 184-amino-acid chain; its full sequence is PXMP2/4 family protein 3 (184 aa).

The N-terminal stretch at 1–44 (MSNSKPLSLTDAVTTWYMKKLKSKPIQTKALTSATLSFISSVVA) is a signal peptide. The next 3 helical transmembrane spans lie at 58 to 78 (VVKF…WHII), 97 to 117 (IVDQ…VLAI), and 159 to 179 (LRVL…SILA).

It belongs to the peroxisomal membrane protein PXMP2/4 family.

It is found in the membrane. The protein is PXMP2/4 family protein 3 of Dictyostelium discoideum (Social amoeba).